A 172-amino-acid chain; its full sequence is Envelope protein UL45 (172 aa).

At 1–27 (MAFRASGPAYQPLAPAASPARARVPAV) the chain is on the intravirion side. The chain crosses the membrane as a helical; Signal-anchor for type II membrane protein span at residues 28–48 (AWIGVGAIVGAFALVAALVLV). The Virion surface portion of the chain corresponds to 49-172 (PPRSSWGLSP…TSIRNALGLP (124 aa)).

The protein belongs to the herpesviridae HHV-1 UL45 family.

It localises to the virion membrane. Its function is as follows. Important virulence factor of HSV neurotropism. Seems to be required for glycoprotein B-induced fusion. Dispensable for growth in vitro. The sequence is that of Envelope protein UL45 from Homo sapiens (Human).